The sequence spans 161 residues: RNA pyrophosphohydrolase (161 aa).

The Nudix hydrolase domain occupies 12–154; that stretch reads PYRPGVGMMI…KRKLYQAVVK (143 aa). Positions 46-67 match the Nudix box motif; that stretch reads GGIVPGETPSIAAMREMLEEIG.

This sequence belongs to the Nudix hydrolase family. RppH subfamily. The cofactor is a divalent metal cation.

Its function is as follows. Accelerates the degradation of transcripts by removing pyrophosphate from the 5'-end of triphosphorylated RNA, leading to a more labile monophosphorylated state that can stimulate subsequent ribonuclease cleavage. The polypeptide is RNA pyrophosphohydrolase (Rickettsia rickettsii (strain Iowa)).